We begin with the raw amino-acid sequence, 475 residues long: Protein nucleotidyltransferase YdiU (475 aa).

ATP-binding residues include glycine 82, glycine 84, arginine 85, lysine 105, aspartate 117, glycine 118, arginine 168, and arginine 175. Aspartate 240 acts as the Proton acceptor in catalysis. Positions 241 and 250 each coordinate Mg(2+). Aspartate 250 contacts ATP.

The protein belongs to the SELO family. Mg(2+) is required as a cofactor. The cofactor is Mn(2+).

The enzyme catalyses L-seryl-[protein] + ATP = 3-O-(5'-adenylyl)-L-seryl-[protein] + diphosphate. The catalysed reaction is L-threonyl-[protein] + ATP = 3-O-(5'-adenylyl)-L-threonyl-[protein] + diphosphate. It catalyses the reaction L-tyrosyl-[protein] + ATP = O-(5'-adenylyl)-L-tyrosyl-[protein] + diphosphate. It carries out the reaction L-histidyl-[protein] + UTP = N(tele)-(5'-uridylyl)-L-histidyl-[protein] + diphosphate. The enzyme catalyses L-seryl-[protein] + UTP = O-(5'-uridylyl)-L-seryl-[protein] + diphosphate. The catalysed reaction is L-tyrosyl-[protein] + UTP = O-(5'-uridylyl)-L-tyrosyl-[protein] + diphosphate. In terms of biological role, nucleotidyltransferase involved in the post-translational modification of proteins. It can catalyze the addition of adenosine monophosphate (AMP) or uridine monophosphate (UMP) to a protein, resulting in modifications known as AMPylation and UMPylation. The chain is Protein nucleotidyltransferase YdiU from Aeromonas salmonicida (strain A449).